Here is a 234-residue protein sequence, read N- to C-terminus: bZIP transcription factor 27 (234 aa).

The Nuclear localization signal motif lies at 152–159 (KKRGQDSD). One can recognise a bZIP domain in the interval 163–213 (GDRRYKRMIKNRESAARSRARKQAYTNELELEIAHLQTENARLKIQQEQLK). The basic motif stretch occupies residues 165 to 184 (RRYKRMIKNRESAARSRARK). A leucine-zipper region spans residues 191–212 (LELEIAHLQTENARLKIQQEQL). A Phosphothreonine modification is found at T231.

It belongs to the bZIP family. As to quaternary structure, self-interacts. Interacts with FT and FD/BZIP14. Interacts with CPK33. Phosphorylated. As to expression, expressed on the flanks of the shoot apex.

The protein localises to the nucleus. In terms of biological role, transcription factor required for the transition to flowering promoted by FT. The polypeptide is bZIP transcription factor 27 (Arabidopsis thaliana (Mouse-ear cress)).